The sequence spans 231 residues: Protein usf (231 aa).

This is Protein usf (usf) from Aquifex pyrophilus.